Reading from the N-terminus, the 209-residue chain is Potassium-transporting ATPase KdpC subunit (209 aa).

The helical transmembrane segment at 18–38 (MLAVFTLFGLGLAYSLVATGI) threads the bilayer.

Belongs to the KdpC family. As to quaternary structure, the system is composed of three essential subunits: KdpA, KdpB and KdpC.

The protein resides in the cell inner membrane. Functionally, part of the high-affinity ATP-driven potassium transport (or Kdp) system, which catalyzes the hydrolysis of ATP coupled with the electrogenic transport of potassium into the cytoplasm. This subunit acts as a catalytic chaperone that increases the ATP-binding affinity of the ATP-hydrolyzing subunit KdpB by the formation of a transient KdpB/KdpC/ATP ternary complex. The sequence is that of Potassium-transporting ATPase KdpC subunit from Xanthomonas oryzae pv. oryzae (strain MAFF 311018).